A 349-amino-acid chain; its full sequence is Probable protease SohB (349 aa).

Over 1 to 8 the chain is Periplasmic; it reads MELLSEYG. The helical transmembrane segment at 9-29 threads the bilayer; it reads LFLAKIVTVVLAIAAIAAIIV. Residues 30–349 lie on the Cytoplasmic side of the membrane; that stretch reads NVAQRNKRQR…WWQRGQKPLM (320 aa). Ser178 serves as the catalytic Nucleophile. Lys230 functions as the Proton donor/acceptor in the catalytic mechanism.

It belongs to the peptidase S49 family.

It is found in the cell inner membrane. Functionally, multicopy suppressor of the HtrA (DegP) null phenotype. It is possibly a protease, not essential for bacterial viability. In Escherichia coli (strain K12), this protein is Probable protease SohB (sohB).